The following is a 432-amino-acid chain: UPF0597 protein APJL_1638 (432 aa).

This sequence belongs to the UPF0597 family.

The chain is UPF0597 protein APJL_1638 from Actinobacillus pleuropneumoniae serotype 3 (strain JL03).